The following is a 317-amino-acid chain: Taste receptor type 2 member 14 (317 aa).

Residues 1 to 7 (MGGVIKS) are Extracellular-facing. A helical transmembrane segment spans residues 8–28 (IFTFVLIVEFIIGNLGNSFIA). Over 29–55 (LVNCIDWVKGRKISSVDRILTALAISK) the chain is Cytoplasmic. A helical transmembrane segment spans residues 56–76 (ISLVWLIFGSWCVSVFFPALF). Residues 77–87 (ATEKMFRMLTN) lie on the Extracellular side of the membrane. Thr86 and Trp89 together coordinate cholesterol. Residues 88 to 108 (IWTVINHFSVWLATGLGTFYF) form a helical membrane-spanning segment. The Cytoplasmic segment spans residues 109-129 (LKIANFSNSIFLYLKWRVKKV). Residues 130 to 150 (VLVLLLVTSVFLFLNIALINI) traverse the membrane as a helical segment. Topologically, residues 151 to 184 (HINASINGYRRNKTCSSDSSNFTRFSSLIVLTST) are extracellular. Asn153, Asn162, and Asn171 each carry an N-linked (GlcNAc...) asparagine glycan. Val180 serves as a coordination point for cholesterol. A helical transmembrane segment spans residues 185–205 (VFIFIPFTLSLAMFLLLIFSM). The Cytoplasmic portion of the chain corresponds to 206–232 (WKHRKKMQHTVKRSGDASTKAHRGVKS). Residues 233–253 (MMTFFLLYAIFSLSFFISVWT) form a helical membrane-spanning segment. Residues 254-261 (SERLEENL) lie on the Extracellular side of the membrane. A helical transmembrane segment spans residues 262 to 282 (IILSQVMGMAYPSCHSCVLIL). Cholesterol contacts are provided by Ser265 and Met268. The Cytoplasmic portion of the chain corresponds to 283-317 (GNKKLRQASLSVLLWLRYMFKDGEPSGHKEFRESS).

It belongs to the G-protein coupled receptor T2R family. As to quaternary structure, core component of the TAS2R14-GNAI1 complex, consisting of TAS2R14, GNAI1, GNB1 and GNG2; within the complex interacts with GNAI1. Core component of the TAS2R14-GNAT3 complex, consisting of TAS2R14, GNAT3, GNB1 and GNG2; within the complex interacts with GNAT3. Core component of the TAS2R14-GNAS2 complex, consisting of TAS2R14, GNAS2, GNB1 and GNG2; within the complex interacts with GNAS2.

It is found in the membrane. The enzyme catalyses Ca(2+)(in) = Ca(2+)(out). It catalyses the reaction 3',5'-cyclic AMP(in) = 3',5'-cyclic AMP(out). Its activity is regulated as follows. Basal activity is enhanced by binding to bitter tastants, such as flufenamic acid and aristolochic acid. Regulated by cholesterol in a concentration-dependent manner. Its function is as follows. Gustducin-linked G-protein coupled receptor that plays a role in the perception of bitterness. The activity of this receptor stimulates GNAT3, activating the gustducin G-protein pathway. Likely plays a role in sensing the chemical composition of the gastrointestinal content and other extra-oral tissues via the inhibitory G-protein pathways. This chain is Taste receptor type 2 member 14 (TAS2R14), found in Pan paniscus (Pygmy chimpanzee).